Reading from the N-terminus, the 223-residue chain is MKILLIEDNQRTQEWVTQGLSEAGYVIDAVSDGRDGLYLALKDDYALIILDIMLPGMDGWQILQTLRTAKQTPVICLTARDSVDDRVRGLDSGANDYLVKPFSFSELLARVRAQLRQHHALNSTLEISGLRMDSVSHSVSRDNISITLTRKEFQLLWLLASRAGEIIPRTVIASEIWGINFDSDTNTVDVAIRRLRAKVDDPFPEKLIATIRGMGYSFVAVKK.

The Response regulatory domain maps to 2-115 (KILLIEDNQR…ELLARVRAQL (114 aa)). A 4-aspartylphosphate modification is found at Asp51. The segment at residues 122–220 (NSTLEISGLR…IRGMGYSFVA (99 aa)) is a DNA-binding region (ompR/PhoB-type).

Phosphorylated by HprS.

It is found in the cytoplasm. Member of a two-component regulatory system HprR/HprS involved in response to hydrogen peroxide. Regulates the expression of at least 5 operons, cyoABCDE, hprRS, hiuH, cusRS and cusCFBA. Bifunctional regulator that acts as an activator and a repressor. The chain is Transcriptional regulatory protein HprR from Escherichia coli (strain K12).